The sequence spans 157 residues: Protein Smg (157 aa).

This sequence belongs to the Smg family.

In Yersinia pestis (strain Pestoides F), this protein is Protein Smg.